The chain runs to 319 residues: Taste receptor type 2 member 39 (319 aa).

Residues 1–16 are Extracellular-facing; sequence MAQPSNYWKQDVLPLS. A helical membrane pass occupies residues 17–37; it reads ILMLTLVATECTIGIIASGIV. The Cytoplasmic segment spans residues 38-65; sequence MAVNAVSWVQKKAISITTRILLLLSVSR. Residues 66-86 form a helical membrane-spanning segment; sequence IGLQSIMLIEITSSIFNVAFY. Residues 87-97 lie on the Extracellular side of the membrane; that stretch reads NSVLYRVSNVS. Asparagine 95 carries N-linked (GlcNAc...) asparagine glycosylation. A helical transmembrane segment spans residues 98 to 118; that stretch reads FVFLNYCSLWFAALLSFFHFV. The Cytoplasmic portion of the chain corresponds to 119 to 137; sequence KIANFSYPLFFKLKWRISE. Residues 138-158 traverse the membrane as a helical segment; sequence LMPWLLWLSVFISFSSSMFFS. Over 159-194 the chain is Extracellular; it reads KHKFTVNNNNSLSNNICNFTMKLYVVETNVVNVSFL. 3 N-linked (GlcNAc...) asparagine glycosylation sites follow: asparagine 167, asparagine 176, and asparagine 190. The helical transmembrane segment at 195–215 threads the bilayer; that stretch reads FISGILPPLTMFVATATLLIF. Residues 216–247 are Cytoplasmic-facing; sequence SLRRHTLNMRNSATGSRNPCIEAHMQAIKETS. Residues 248 to 268 form a helical membrane-spanning segment; sequence CFLFLYILNAAALLLSTSNIV. Residues 269–273 are Extracellular-facing; that stretch reads DASLF. Residues 274 to 294 form a helical membrane-spanning segment; sequence WSIVIRIVLPVYPAGHSVLLI. The Cytoplasmic segment spans residues 295 to 319; that stretch reads QNNPGLRRTWKHLQSQIHLYLQNRF.

The protein belongs to the G-protein coupled receptor T2R family.

Its subcellular location is the membrane. Functionally, putative taste receptor which may play a role in the perception of bitterness. This chain is Taste receptor type 2 member 39 (Tas2r39), found in Mus musculus (Mouse).